Reading from the N-terminus, the 866-residue chain is MSNNLQDILAAASGYQSVTSEPALNRKRPKTLDDYPVIPPASKKVSVISSDLTLHIGFDTEYVFNPETRQNDILSYQSYVVLPDNTGISNIIYPPDSQKKSRLSFKDFLCQTITPLLETGVITKWPGIINIYAHFIRADIASFANFWSDYKILLKGIRGTVSSFKNRYGIDFDEQQERRVKTEQIMFDKRTSPPRCSNVAFIDTLLITPGGMGLAECGELLGLPKLTIPAPYSITNMREYLLGDRAGFEAYALRDAEIAVRYALQVRNFCARELMIDRVPATIGAMAVSRFTKTLKENNMSPEVCLGTHIKTRELWLTEKQAFRTIKNPASVPSRELFETFPINCYHGGRNECFMMGVTPSDHWYDYDLAGAYTTGLLDILTPDYGNIRLSKNPDDYCGHVMGFALVTFRFPESVPYPSLPVRTDQYGLFFPLSGESWATAPEIELALSLGAEMTIHNGIIVPWICDTSPHNSESTSVFLPFVQQVRENRNRHIKGSLEEKFWKEIGNSLYGKLAQGLRAKTAFDTARGLNRSLPPSSVTQPFFAAHVTGFIRAVVGELMNALPSDSSVVSVTTDGFLTNCPLDKINMSGPLSSRFQSLCDIVDPGSSMLTCKHEVSQLIAMKTRGQLTYKAIQGKPVVHARAGVKPPADIPRSDYNDYMVDLYLNRLPGQTLSRSTLISTREMWLSESDLVSREQDIRLNLEFDFKRQPVRPAMNEGHLLMFSRPWDNMEEALQQRSLFDDWRQTHTLKTLADWDDWCDFLYCRTVFSDMKLKVGSKRSDDILVRLFLRALTQCQWGLMLKDKKSYSCKEVAEWLTSEGYSVTVTDVKNAVRAKIPQMKFSSVTPRMKSLMDIIARKYPTFCLPV.

The segment at 50 to 286 (SDLTLHIGFD…DRVPATIGAM (237 aa)) is exonuclease domain. The segment at 287–385 (AVSRFTKTLK…GLLDILTPDY (99 aa)) is palm1 domain. The segment at 386-481 (GNIRLSKNPD…NSESTSVFLP (96 aa)) is TPR1 domain. The segment at 482 to 522 (FVQQVRENRNRHIKGSLEEKFWKEIGNSLYGKLAQGLRAKT) is fingers domain. Residues 523-549 (AFDTARGLNRSLPPSSVTQPFFAAHVT) form a TPR2 domain region. The tract at residues 550-678 (GFIRAVVGEL…PGQTLSRSTL (129 aa)) is palm2 domain. The segment at 679-866 (ISTREMWLSE…RKYPTFCLPV (188 aa)) is thumb domain.

Mn(2+) serves as cofactor.

It catalyses the reaction DNA(n) + a 2'-deoxyribonucleoside 5'-triphosphate = DNA(n+1) + diphosphate. Its function is as follows. DNA polymerase with primer-independent templated DNA polymerization activity, primer-dependent DNA polymerization activity with strand displacement, translesion synthesis activity across non-bulky base damage, 3'-5' exodeoxyribonuclease activity, and de novo primer synthesis activity. The enzyme is processive and faithful. Translation synthesis across abasic sites is coupled to de novo primer synthesis. Overexpression of wild-type protein increases survival of cells upon mitomycin C or UV treatment. The protein is Primer-independent DNA polymerase PolB (pi-polB) of Escherichia coli.